Here is a 187-residue protein sequence, read N- to C-terminus: Elongation factor P (187 aa).

This sequence belongs to the elongation factor P family.

It localises to the cytoplasm. The protein operates within protein biosynthesis; polypeptide chain elongation. Its function is as follows. Involved in peptide bond synthesis. Stimulates efficient translation and peptide-bond synthesis on native or reconstituted 70S ribosomes in vitro. Probably functions indirectly by altering the affinity of the ribosome for aminoacyl-tRNA, thus increasing their reactivity as acceptors for peptidyl transferase. The chain is Elongation factor P from Ruegeria sp. (strain TM1040) (Silicibacter sp.).